The primary structure comprises 502 residues: MKLIETIKKYAQTQPDTLAFVNEEEKLTYGELWSQSERLAARIQSEALTDASPIIVYGHMKPVMAVSFLACVKAGHPYIPVDVSIPADRILKIINSSKAELLLNNSGTSVDTGDALISVVEPGVLEGDGVPETDPGRWVHGEDTFYIIYTSGSTGNPKGVQISADNLQSFTDWITNDFPVESGQVFLNQAPFSFDLSVMDLYPCLQSGGTLWTVTKDMINRPKLLFEALKQSNVNVWTSTPSFAQMCLMDPSYSEELLPELSLFMFCGETLPASVARQLKERFPKARVFNTYGPTEATVAVTSIEVTDDVLNKYSSLPVGSEKPETEIVIINEDGKAVQDGEKGEIIITGASVSKGYLGEKALTEKAFFSYNGSPAYRTGDAGYKENGQLFFLGRLDFQIKLHGYRIELEEIEYQINQSRYVQSAVVIPFYREEKIEYLIAMIVPAEHDFEKEYQLTSAIKKDLGSKLPAYMIPRKFMYQKEIPMTANGKIDRKRLKEEVTV.

150-151 (TS) contacts ATP. Residue Asp-195 participates in D-alanine binding. An ATP-binding site is contributed by 290–295 (NTYGPT). Position 299 (Val-299) interacts with D-alanine. The ATP site is built by Asp-381 and Lys-490. Lys-490 is a binding site for D-alanine.

Belongs to the ATP-dependent AMP-binding enzyme family. DltA subfamily.

It localises to the cytoplasm. The catalysed reaction is holo-[D-alanyl-carrier protein] + D-alanine + ATP = D-alanyl-[D-alanyl-carrier protein] + AMP + diphosphate. It participates in cell wall biogenesis; lipoteichoic acid biosynthesis. In terms of biological role, catalyzes the first step in the D-alanylation of lipoteichoic acid (LTA), the activation of D-alanine and its transfer onto the D-alanyl carrier protein (Dcp) DltC. In an ATP-dependent two-step reaction, forms a high energy D-alanyl-AMP intermediate, followed by transfer of the D-alanyl residue as a thiol ester to the phosphopantheinyl prosthetic group of the Dcp. D-alanylation of LTA plays an important role in modulating the properties of the cell wall in Gram-positive bacteria, influencing the net charge of the cell wall. The chain is D-alanine--D-alanyl carrier protein ligase from Bacillus licheniformis (strain ATCC 14580 / DSM 13 / JCM 2505 / CCUG 7422 / NBRC 12200 / NCIMB 9375 / NCTC 10341 / NRRL NRS-1264 / Gibson 46).